Consider the following 325-residue polypeptide: ADP-L-glycero-D-manno-heptose-6-epimerase (325 aa).

NADP(+)-binding positions include 10 to 11 (FI), 31 to 32 (DD), lysine 38, and 75 to 79 (EGACS). Residue tyrosine 139 is the Proton acceptor of the active site. Lysine 143 is a binding site for NADP(+). Asparagine 167 lines the substrate pocket. Residues valine 168 and lysine 176 each contribute to the NADP(+) site. The active-site Proton acceptor is the lysine 176. Residues serine 178, histidine 185, 199 to 202 (FEGS), arginine 212, and tyrosine 285 each bind substrate.

This sequence belongs to the NAD(P)-dependent epimerase/dehydratase family. HldD subfamily. In terms of assembly, homopentamer. The cofactor is NADP(+).

It catalyses the reaction ADP-D-glycero-beta-D-manno-heptose = ADP-L-glycero-beta-D-manno-heptose. It functions in the pathway nucleotide-sugar biosynthesis; ADP-L-glycero-beta-D-manno-heptose biosynthesis; ADP-L-glycero-beta-D-manno-heptose from D-glycero-beta-D-manno-heptose 7-phosphate: step 4/4. Catalyzes the interconversion between ADP-D-glycero-beta-D-manno-heptose and ADP-L-glycero-beta-D-manno-heptose via an epimerization at carbon 6 of the heptose. The sequence is that of ADP-L-glycero-D-manno-heptose-6-epimerase from Azoarcus sp. (strain BH72).